The primary structure comprises 473 residues: ATP synthase subunit beta (473 aa).

158–165 is a binding site for ATP; that stretch reads GGAGVGKT.

Belongs to the ATPase alpha/beta chains family. In terms of assembly, F-type ATPases have 2 components, CF(1) - the catalytic core - and CF(0) - the membrane proton channel. CF(1) has five subunits: alpha(3), beta(3), gamma(1), delta(1), epsilon(1). CF(0) has three main subunits: a(1), b(2) and c(9-12). The alpha and beta chains form an alternating ring which encloses part of the gamma chain. CF(1) is attached to CF(0) by a central stalk formed by the gamma and epsilon chains, while a peripheral stalk is formed by the delta and b chains.

The protein resides in the cell membrane. It carries out the reaction ATP + H2O + 4 H(+)(in) = ADP + phosphate + 5 H(+)(out). Produces ATP from ADP in the presence of a proton gradient across the membrane. The catalytic sites are hosted primarily by the beta subunits. In Bacillus sp. (strain PS3), this protein is ATP synthase subunit beta.